Reading from the N-terminus, the 148-residue chain is Putative nickel-responsive regulator (148 aa).

Ni(2+) is bound by residues histidine 88, histidine 99, histidine 101, and cysteine 107.

This sequence belongs to the transcriptional regulatory CopG/NikR family. Requires Ni(2+) as cofactor.

In terms of biological role, transcriptional regulator. This is Putative nickel-responsive regulator from Helicobacter pylori (strain P12).